The primary structure comprises 480 residues: tRNA-2-methylthio-N(6)-dimethylallyladenosine synthase (480 aa).

One can recognise an MTTase N-terminal domain in the interval 31–151 (RGLHVITWGC…LPEMVARAAR (121 aa)). [4Fe-4S] cluster-binding residues include Cys-40, Cys-76, Cys-114, Cys-192, Cys-196, and Cys-199. Positions 178–410 (SPGGITSFLT…QALLRTQQDA (233 aa)) constitute a Radical SAM core domain. In terms of domain architecture, TRAM spans 413-475 (DGTVGHVVPV…TNSLSGTLVQ (63 aa)).

The protein belongs to the methylthiotransferase family. MiaB subfamily. Monomer. Requires [4Fe-4S] cluster as cofactor.

The protein resides in the cytoplasm. It carries out the reaction N(6)-dimethylallyladenosine(37) in tRNA + (sulfur carrier)-SH + AH2 + 2 S-adenosyl-L-methionine = 2-methylsulfanyl-N(6)-dimethylallyladenosine(37) in tRNA + (sulfur carrier)-H + 5'-deoxyadenosine + L-methionine + A + S-adenosyl-L-homocysteine + 2 H(+). Its function is as follows. Catalyzes the methylthiolation of N6-(dimethylallyl)adenosine (i(6)A), leading to the formation of 2-methylthio-N6-(dimethylallyl)adenosine (ms(2)i(6)A) at position 37 in tRNAs that read codons beginning with uridine. This chain is tRNA-2-methylthio-N(6)-dimethylallyladenosine synthase, found in Gluconacetobacter diazotrophicus (strain ATCC 49037 / DSM 5601 / CCUG 37298 / CIP 103539 / LMG 7603 / PAl5).